The primary structure comprises 441 residues: Signal recognition particle 54 kDa protein (441 aa).

GTP-binding positions include 103–110 (GVQGSGKT), 184–188 (DTAGR), and 244–247 (TKMD).

This sequence belongs to the GTP-binding SRP family. SRP54 subfamily. As to quaternary structure, part of the signal recognition particle protein translocation system, which is composed of SRP and FtsY. Archaeal SRP consists of a 7S RNA molecule of 300 nucleotides and two protein subunits: SRP54 and SRP19.

Its subcellular location is the cytoplasm. It carries out the reaction GTP + H2O = GDP + phosphate + H(+). In terms of biological role, involved in targeting and insertion of nascent membrane proteins into the cytoplasmic membrane. Binds to the hydrophobic signal sequence of the ribosome-nascent chain (RNC) as it emerges from the ribosomes. The SRP-RNC complex is then targeted to the cytoplasmic membrane where it interacts with the SRP receptor FtsY. The chain is Signal recognition particle 54 kDa protein from Aeropyrum pernix (strain ATCC 700893 / DSM 11879 / JCM 9820 / NBRC 100138 / K1).